Consider the following 268-residue polypeptide: uncharacterized protein (268 aa).

The stretch at 132 to 159 (DELDEKIIEFDTKMNEILEELLEDVEVE) forms a coiled coil.

This is an uncharacterized protein from Methanocaldococcus jannaschii (strain ATCC 43067 / DSM 2661 / JAL-1 / JCM 10045 / NBRC 100440) (Methanococcus jannaschii).